The primary structure comprises 338 residues: 1-aminocyclopropane-1-carboxylate deaminase (338 aa).

Lys-51 carries the post-translational modification N6-(pyridoxal phosphate)lysine. Ser-78 serves as the catalytic Nucleophile.

The protein belongs to the ACC deaminase/D-cysteine desulfhydrase family. In terms of assembly, homotrimer. Pyridoxal 5'-phosphate is required as a cofactor.

It catalyses the reaction 1-aminocyclopropane-1-carboxylate + H2O = 2-oxobutanoate + NH4(+). Functionally, catalyzes a cyclopropane ring-opening reaction, the irreversible conversion of 1-aminocyclopropane-1-carboxylate (ACC) to ammonia and alpha-ketobutyrate. Allows growth on ACC as a nitrogen source. The polypeptide is 1-aminocyclopropane-1-carboxylate deaminase (Pseudomonas sp. (strain ACP)).